The sequence spans 134 residues: Alkaline proteinase inhibitor (134 aa).

Residues 1–26 (MVFAAWYLKFAFFVALAFSIIGGSMA) form the signal peptide. The cysteines at positions 50 and 73 are disulfide-linked.

The protein belongs to the protease inhibitor I38 family.

It is found in the periplasm. Functionally, inhibitor of the alkaline protease. This chain is Alkaline proteinase inhibitor (inh), found in Photorhabdus luminescens (Xenorhabdus luminescens).